The chain runs to 712 residues: Polyribonucleotide nucleotidyltransferase (712 aa).

Residues Asp-484 and Asp-490 each coordinate Mg(2+). The KH domain occupies 550–609 (PKYKTMDVNPEKIRVLIGPGGKNIKAIIEETGSDVEIQDSGVVNIFAPDTPTLDKTIKLI). Positions 619 to 686 (GEVYDGIVKD…KGGKYSLSRK (68 aa)) constitute an S1 motif domain.

Belongs to the polyribonucleotide nucleotidyltransferase family. The cofactor is Mg(2+).

Its subcellular location is the cytoplasm. The enzyme catalyses RNA(n+1) + phosphate = RNA(n) + a ribonucleoside 5'-diphosphate. Involved in mRNA degradation. Catalyzes the phosphorolysis of single-stranded polyribonucleotides processively in the 3'- to 5'-direction. This Brachyspira hyodysenteriae (strain ATCC 49526 / WA1) protein is Polyribonucleotide nucleotidyltransferase.